Reading from the N-terminus, the 163-residue chain is MVFVKTLHRTLFLEVAANEDVLSIKQKIEAAEGIPAEEQRLCYAGRQLEDSDCGIDSEATIYVNLELLGGAKKRKKKVYTTPKKNKRKPKKVKLAVLKYYKIDENGKITRLRKECQQPSCGGGVFMAQHANRHYCGRCHDTLVVDTATAAATSGEKGGKKGKK.

Positions 1–70 (MVFVKTLHRT…IYVNLELLGG (70 aa)) constitute a Ubiquitin-like domain. A Glycyl lysine isopeptide (Gly-Lys) (interchain with K-? in acceptor proteins) cross-link involves residue Gly-70. The C4-type zinc-finger motif lies at 115–138 (CQQPSCGGGVFMAQHANRHYCGRC).

This sequence in the N-terminal section; belongs to the ubiquitin family. It in the C-terminal section; belongs to the eukaryotic ribosomal protein eS31 family.

The protein is Ubiquitin-like protein 1-ribosomal protein eS31 fusion protein of Caenorhabditis elegans.